A 340-amino-acid polypeptide reads, in one-letter code: MKKKLLVLTMSTLFATQIMNSNHAKASVTESVDKKFVVPESGINKIIPTYNEFKKAPKVNVGNLADNKNFVASEDKLNKIVDSSAASKIVDKNFAVPESKLGNIVPEYKEINNRVNVATNNPASQQVDKHFVAKGPEVNRFITQNKVNHHFITTQTHYKKVITSYKSTHVHKHVNHAKDSINKHFIVKPSESPRYTHPSQSLIIKHHFAVPGYHAHKFVTPGHASIKINHFCVVPQINSFKVIPPYGHNSHRMHVPSFQNNTTATHQNAKVNKAYDYKYFYSYKVVKGVKKYFSFSQSNGYKIGKPSLNIKNVNYQYAVPSYSPTHYVPEFKGSLPAPRV.

Positions 1–26 (MKKKLLVLTMSTLFATQIMNSNHAKA) are cleaved as a signal peptide.

It localises to the cell surface. Functionally, adhesin that binds to the host cell extracellular matrix proteins fibronectin, fibrinogen, collagen, and vitronectin. The polypeptide is Extracellular matrix protein-binding protein emp (emp) (Staphylococcus aureus (strain MSSA476)).